A 125-amino-acid polypeptide reads, in one-letter code: Protein ApaG (125 aa).

The ApaG domain maps to 1–125 (MINAPRVCVQ…FRLAIPSLIH (125 aa)).

The sequence is that of Protein ApaG from Pectobacterium atrosepticum (strain SCRI 1043 / ATCC BAA-672) (Erwinia carotovora subsp. atroseptica).